Here is a 122-residue protein sequence, read N- to C-terminus: Large ribosomal subunit protein uL14c (122 aa).

The protein belongs to the universal ribosomal protein uL14 family. As to quaternary structure, part of the 50S ribosomal subunit.

The protein localises to the plastid. It localises to the chloroplast. In terms of biological role, binds to 23S rRNA. The protein is Large ribosomal subunit protein uL14c of Drimys granadensis.